We begin with the raw amino-acid sequence, 941 residues long: Probable respiratory burst oxidase homolog protein I (941 aa).

The Cytoplasmic segment spans residues 1 to 374 (MSMSFSGGTH…LYSLQDNWKR (374 aa)). 2 disordered regions span residues 29–48 (PSLP…SGEE) and 103–166 (ERLT…SGTE). The span at 36–45 (SPSPSSSSSS) shows a compositional bias: low complexity. Residues 103 to 117 (ERLTAGTNSKQQIQK) show a composition bias toward polar residues. EF-hand-like regions lie at residues 196-204 (SKDGYLFKS) and 232-243 (RRIMVDKINLQE). An EF-hand domain is found at 254–289 (ESFDSRLQIFFNMVKNGDGRITENEVKEIIILSASA). The Ca(2+) site is built by Asn-269, Asp-271, Arg-273, and Glu-278. 2 positions are modified to phosphoserine: Ser-346 and Ser-350. A helical membrane pass occupies residues 375-395 (IWVLTLWFVIMAWLFMWKCYQ). Over 396-407 (YKHKDAFHVMGY) the chain is Extracellular. A helical membrane pass occupies residues 408 to 428 (CLVMAKGAAETLKFNMALILL). Residues 413–570 (KGAAETLKFN…LLLTVYVLLV (158 aa)) enclose the Ferric oxidoreductase domain. The Cytoplasmic segment spans residues 429 to 514 (PVCRNTITYL…YFGLVNTPVG (86 aa)). A helical membrane pass occupies residues 515–535 (ITGIIMVAFMLIAFTLASRRC). Residues 536–557 (RRNLTKLPKPFDKLTGYNAFWY) are Extracellular-facing. A helical membrane pass occupies residues 558 to 578 (SHHLLLTVYVLLVIHGVSLYL). The Cytoplasmic portion of the chain corresponds to 579-586 (EHKWYRKT). A helical transmembrane segment spans residues 587 to 604 (VWMYLAVPVLLYVGERIF). Over 605–731 (RFFRSRLYTV…PYGAPAQDHW (127 aa)) the chain is Extracellular. Positions 609–729 (SRLYTVEICK…DGPYGAPAQD (121 aa)) constitute an FAD-binding FR-type domain. The helical transmembrane segment at 732 to 752 (KYDVVLLVGLGIGATPFVSIL) threads the bilayer. Topologically, residues 753–941 (RDLLNNIIKQ…TRFDFHKEQF (189 aa)) are cytoplasmic.

The protein belongs to the RBOH (TC 5.B.1.3) family. Monomer and homodimer.

The protein resides in the membrane. Its function is as follows. Calcium-dependent NADPH oxidase that generates superoxide. This is Probable respiratory burst oxidase homolog protein I (RBOHI) from Arabidopsis thaliana (Mouse-ear cress).